A 105-amino-acid chain; its full sequence is N(4)-acetylcytidine amidohydrolase (105 aa).

The ASCH domain occupies 7-93 (TFFERFEHDI…VIAEIYPGLE (87 aa)). Residue K21 is the Proton acceptor of the active site. T24 acts as the Nucleophile in catalysis. E74 serves as the catalytic Proton donor.

This sequence belongs to the N(4)-acetylcytidine amidohydrolase family.

It catalyses the reaction N(4)-acetylcytidine + H2O = cytidine + acetate + H(+). The catalysed reaction is N(4)-acetyl-2'-deoxycytidine + H2O = 2'-deoxycytidine + acetate + H(+). It carries out the reaction N(4)-acetylcytosine + H2O = cytosine + acetate + H(+). Its function is as follows. Catalyzes the hydrolysis of N(4)-acetylcytidine (ac4C). This chain is N(4)-acetylcytidine amidohydrolase, found in Shewanella baltica (strain OS185).